The sequence spans 70 residues: MPRKIEEIKDFLLTARRKDAKSVKIKKNKDNVKFKVRCSRYLYTLVITDKEKAEKLKQSLPPGLAVKEPK.

Residue Lys4 forms a Glycyl lysine isopeptide (Lys-Gly) (interchain with G-Cter in SUMO2) linkage. N6-acetyllysine; alternate is present on Lys9. Lys9 participates in a covalent cross-link: Glycyl lysine isopeptide (Lys-Gly) (interchain with G-Cter in SUMO2); alternate. The residue at position 67 (Lys67) is an N6-acetyllysine.

It belongs to the eukaryotic ribosomal protein eL38 family. Component of the large ribosomal subunit.

It localises to the cytoplasm. Functionally, component of the large ribosomal subunit. The ribosome is a large ribonucleoprotein complex responsible for the synthesis of proteins in the cell. The chain is Large ribosomal subunit protein eL38 (RPL38) from Macaca fascicularis (Crab-eating macaque).